The sequence spans 504 residues: Cytochrome P450 3A41 (504 aa).

Cysteine 443 is a heme binding site.

Belongs to the cytochrome P450 family. Heme serves as cofactor. Expressed in liver. Also expressed in the kidneys of female mice, with traces in the stomach, ovary, and heart of female mice and in the testis of male mice.

It localises to the endoplasmic reticulum membrane. Its subcellular location is the microsome membrane. The catalysed reaction is an organic molecule + reduced [NADPH--hemoprotein reductase] + O2 = an alcohol + oxidized [NADPH--hemoprotein reductase] + H2O + H(+). This Mus musculus (Mouse) protein is Cytochrome P450 3A41 (Cyp3a41a).